The sequence spans 273 residues: Undecaprenyl-diphosphatase (273 aa).

8 consecutive transmembrane segments (helical) span residues 13 to 35 (GLVE…VFGN), 45 to 62 (VFEI…VFEY), 82 to 102 (FVLN…LFGK), 108 to 128 (LFNP…ILWV), 144 to 164 (ALRP…LIPG), 186 to 206 (TEFS…YDVL), 219 to 239 (LILI…KALL), and 250 to 270 (FAYY…SGWI).

Belongs to the UppP family.

Its subcellular location is the cell inner membrane. The catalysed reaction is di-trans,octa-cis-undecaprenyl diphosphate + H2O = di-trans,octa-cis-undecaprenyl phosphate + phosphate + H(+). In terms of biological role, catalyzes the dephosphorylation of undecaprenyl diphosphate (UPP). Confers resistance to bacitracin. The chain is Undecaprenyl-diphosphatase from Neisseria meningitidis serogroup C (strain 053442).